Consider the following 349-residue polypeptide: Fructose-1,6-bisphosphatase class 1 (349 aa).

Positions 91, 110, 112, and 113 each coordinate Mg(2+). Substrate is bound by residues 113–116 (DGSS) and Asn-205. Residue Glu-277 participates in Mg(2+) binding.

It belongs to the FBPase class 1 family. In terms of assembly, homotetramer. Requires Mg(2+) as cofactor.

It localises to the cytoplasm. It carries out the reaction beta-D-fructose 1,6-bisphosphate + H2O = beta-D-fructose 6-phosphate + phosphate. Its pathway is carbohydrate biosynthesis; gluconeogenesis. The sequence is that of Fructose-1,6-bisphosphatase class 1 from Sinorhizobium medicae (strain WSM419) (Ensifer medicae).